A 218-amino-acid chain; its full sequence is Ribosomal RNA large subunit methyltransferase E (218 aa).

S-adenosyl-L-methionine-binding residues include G64, W66, D92, D108, and D133. Residue K173 is the Proton acceptor of the active site.

It belongs to the class I-like SAM-binding methyltransferase superfamily. RNA methyltransferase RlmE family.

It localises to the cytoplasm. The enzyme catalyses uridine(2552) in 23S rRNA + S-adenosyl-L-methionine = 2'-O-methyluridine(2552) in 23S rRNA + S-adenosyl-L-homocysteine + H(+). In terms of biological role, specifically methylates the uridine in position 2552 of 23S rRNA at the 2'-O position of the ribose in the fully assembled 50S ribosomal subunit. This Paracidovorax citrulli (strain AAC00-1) (Acidovorax citrulli) protein is Ribosomal RNA large subunit methyltransferase E.